The following is a 275-amino-acid chain: Large ribosomal subunit protein uL2 (275 aa).

Residues 28–38 (RPYDGLLEKKS) show a composition bias toward basic and acidic residues. Disordered stretches follow at residues 28-58 (RPYD…GGGH) and 223-275 (VAMN…RKAK). The segment covering 254-275 (KGHKTRKNKRTDKLIVRRRKAK) has biased composition (basic residues).

The protein belongs to the universal ribosomal protein uL2 family. In terms of assembly, part of the 50S ribosomal subunit. Forms a bridge to the 30S subunit in the 70S ribosome.

Functionally, one of the primary rRNA binding proteins. Required for association of the 30S and 50S subunits to form the 70S ribosome, for tRNA binding and peptide bond formation. It has been suggested to have peptidyltransferase activity; this is somewhat controversial. Makes several contacts with the 16S rRNA in the 70S ribosome. In Chromohalobacter salexigens (strain ATCC BAA-138 / DSM 3043 / CIP 106854 / NCIMB 13768 / 1H11), this protein is Large ribosomal subunit protein uL2.